A 399-amino-acid polypeptide reads, in one-letter code: La protein 2 (399 aa).

Positions 3–106 (SSFNEETAKK…GRGTKLSKPE (104 aa)) constitute an HTH La-type RNA-binding domain. An RRM domain is found at 115–192 (RTLAASPFEY…ADLVLIPKSD (78 aa)). One can recognise a xRRM domain in the interval 269–399 (SLCKDNTDQL…QPTKKARKEP (131 aa)). The tract at residues 367–399 (AELEGGKEGHKKEKGKDECFENVQPTKKARKEP) is disordered. Basic and acidic residues predominate over residues 370–385 (EGGKEGHKKEKGKDEC).

As to expression, expressed ubiquitously (at protein level).

The protein localises to the nucleus. Its subcellular location is the nucleoplasm. The protein resides in the nucleolus. Its function is as follows. Binds to the 3' poly(U) terminus of nascent RNA polymerase III transcripts, protecting them from exonuclease digestion and facilitating their folding and maturation. The protein is La protein 2 (LA2) of Arabidopsis thaliana (Mouse-ear cress).